A 126-amino-acid polypeptide reads, in one-letter code: Small ribosomal subunit protein uS13 (126 aa).

The interval 94–126 is disordered; it reads RNLPVHGQRTHTNARTRKGPRRAIAGKKKAGKK.

The protein belongs to the universal ribosomal protein uS13 family. In terms of assembly, part of the 30S ribosomal subunit. Forms a loose heterodimer with protein S19. Forms two bridges to the 50S subunit in the 70S ribosome.

In terms of biological role, located at the top of the head of the 30S subunit, it contacts several helices of the 16S rRNA. In the 70S ribosome it contacts the 23S rRNA (bridge B1a) and protein L5 of the 50S subunit (bridge B1b), connecting the 2 subunits; these bridges are implicated in subunit movement. Contacts the tRNAs in the A and P-sites. The sequence is that of Small ribosomal subunit protein uS13 from Parafrankia sp. (strain EAN1pec).